The chain runs to 408 residues: MNAPFEKDRRNRRVAVVVVAAGRGERAGQAQNGPKQYRLIGGKPVIRHTLEVLAKSKRVGTIAVAVHPEDSSLFNQAREGLDGDIRAVHGGASRQESTRLALAALEEVKPDIVLIHDGVRPFIDEALIERVIEAVGEDSGALPALPVSDTLKRSGVNGIITGTVPRDGLFAAQTPQGFPFRPIYEAHQKAWQSGRSDFTDDAAIAEWAGISVRLVSGSPDNVKLTWAKDIALADQRLGPAMTELPDIRVGNGYDVHGFGPGGHVTLCGVQIPHGKTLMGHSDADVGLHALTDALLATCGAGDIGTHFPPSDPQWKGAKSRIFVEHAVNLLRARGGRIANADVTLICEAPRIGPYREAMLAELSDMLQISPERVSVKATTNEGLGFIGRAEGIAAIATATVAYPGSLGN.

Positions 1-247 (MNAPFEKDRR…GPAMTELPDI (247 aa)) are 2-C-methyl-D-erythritol 4-phosphate cytidylyltransferase. The 2-C-methyl-D-erythritol 2,4-cyclodiphosphate synthase stretch occupies residues 248 to 408 (RVGNGYDVHG…TVAYPGSLGN (161 aa)). A divalent metal cation is bound by residues Asp-254 and His-256. Residues 254–256 (DVH) and 280–281 (HS) contribute to the 4-CDP-2-C-methyl-D-erythritol 2-phosphate site. Residue His-288 coordinates a divalent metal cation. 4-CDP-2-C-methyl-D-erythritol 2-phosphate is bound by residues 302–304 (DIG), 378–381 (TTNE), Phe-385, and Arg-388.

This sequence in the N-terminal section; belongs to the IspD/TarI cytidylyltransferase family. IspD subfamily. The protein in the C-terminal section; belongs to the IspF family. A divalent metal cation is required as a cofactor.

It catalyses the reaction 2-C-methyl-D-erythritol 4-phosphate + CTP + H(+) = 4-CDP-2-C-methyl-D-erythritol + diphosphate. It carries out the reaction 4-CDP-2-C-methyl-D-erythritol 2-phosphate = 2-C-methyl-D-erythritol 2,4-cyclic diphosphate + CMP. Its pathway is isoprenoid biosynthesis; isopentenyl diphosphate biosynthesis via DXP pathway; isopentenyl diphosphate from 1-deoxy-D-xylulose 5-phosphate: step 2/6. It functions in the pathway isoprenoid biosynthesis; isopentenyl diphosphate biosynthesis via DXP pathway; isopentenyl diphosphate from 1-deoxy-D-xylulose 5-phosphate: step 4/6. Functionally, bifunctional enzyme that catalyzes the formation of 4-diphosphocytidyl-2-C-methyl-D-erythritol from CTP and 2-C-methyl-D-erythritol 4-phosphate (MEP) (IspD), and catalyzes the conversion of 4-diphosphocytidyl-2-C-methyl-D-erythritol 2-phosphate (CDP-ME2P) to 2-C-methyl-D-erythritol 2,4-cyclodiphosphate (ME-CPP) with a corresponding release of cytidine 5-monophosphate (CMP) (IspF). The chain is Bifunctional enzyme IspD/IspF from Chelativorans sp. (strain BNC1).